A 189-amino-acid polypeptide reads, in one-letter code: Peptidyl-tRNA hydrolase (189 aa).

Residue Tyr14 participates in tRNA binding. His19 functions as the Proton acceptor in the catalytic mechanism. TRNA is bound by residues Tyr64, Asn66, and Asn112.

It belongs to the PTH family. Monomer.

It localises to the cytoplasm. It catalyses the reaction an N-acyl-L-alpha-aminoacyl-tRNA + H2O = an N-acyl-L-amino acid + a tRNA + H(+). In terms of biological role, hydrolyzes ribosome-free peptidyl-tRNAs (with 1 or more amino acids incorporated), which drop off the ribosome during protein synthesis, or as a result of ribosome stalling. Its function is as follows. Catalyzes the release of premature peptidyl moieties from peptidyl-tRNA molecules trapped in stalled 50S ribosomal subunits, and thus maintains levels of free tRNAs and 50S ribosomes. The protein is Peptidyl-tRNA hydrolase of Clostridium botulinum (strain Kyoto / Type A2).